Consider the following 367-residue polypeptide: Leucine carboxyl methyltransferase 1 (367 aa).

Residues Arg84, Gly109, Asp132, 187–188, and Glu212 contribute to the S-adenosyl-L-methionine site; that span reads DL.

The protein belongs to the methyltransferase superfamily. LCMT family.

It catalyses the reaction [phosphatase 2A protein]-C-terminal L-leucine + S-adenosyl-L-methionine = [phosphatase 2A protein]-C-terminal L-leucine methyl ester + S-adenosyl-L-homocysteine. Methylates the carboxyl group of the C-terminal leucine residue of protein phosphatase 2A catalytic subunits to form alpha-leucine ester residues. The protein is Leucine carboxyl methyltransferase 1 (PPM1) of Candida albicans (strain SC5314 / ATCC MYA-2876) (Yeast).